A 295-amino-acid chain; its full sequence is Ethanolamine ammonia-lyase small subunit (295 aa).

V207, E228, and C258 together coordinate adenosylcob(III)alamin.

The protein belongs to the EutC family. In terms of assembly, the basic unit is a heterodimer which dimerizes to form tetramers. The heterotetramers trimerize; 6 large subunits form a core ring with 6 small subunits projecting outwards. Requires adenosylcob(III)alamin as cofactor.

The protein resides in the bacterial microcompartment. The catalysed reaction is ethanolamine = acetaldehyde + NH4(+). Its pathway is amine and polyamine degradation; ethanolamine degradation. Its function is as follows. Catalyzes the deamination of various vicinal amino-alcohols to oxo compounds. Allows this organism to utilize ethanolamine as the sole source of nitrogen and carbon in the presence of external vitamin B12. The chain is Ethanolamine ammonia-lyase small subunit from Escherichia coli (strain 55989 / EAEC).